Consider the following 530-residue polypeptide: Chaperonin GroEL, chloroplastic (530 aa).

ATP is bound by residues 29–32 (TLGP), 86–90 (DGTTT), glycine 414, 480–482 (DAL), and aspartate 496.

This sequence belongs to the chaperonin (HSP60) family. Forms a cylinder of 14 subunits composed of two heptameric rings stacked back-to-back. Interacts with the co-chaperonin GroES.

It is found in the plastid. Its subcellular location is the chloroplast. The enzyme catalyses ATP + H2O + a folded polypeptide = ADP + phosphate + an unfolded polypeptide.. Functionally, together with its co-chaperonin GroES, plays an essential role in assisting protein folding. The GroEL-GroES system forms a nano-cage that allows encapsulation of the non-native substrate proteins and provides a physical environment optimized to promote and accelerate protein folding. This chain is Chaperonin GroEL, chloroplastic, found in Cyanidium caldarium (Red alga).